Reading from the N-terminus, the 47-residue chain is Conotoxin reg3.11 (47 aa).

A propeptide spanning residues aspartate 1–glutamine 31 is cleaved from the precursor. 3 cysteine pairs are disulfide-bonded: cysteine 32-cysteine 44, cysteine 33-cysteine 42, and cysteine 38-cysteine 45. A propeptide spanning residues tyrosine 46–histidine 47 is cleaved from the precursor.

It belongs to the conotoxin M superfamily. In terms of tissue distribution, expressed by the venom duct.

The protein resides in the secreted. This Conus regius (Crown cone) protein is Conotoxin reg3.11.